A 484-amino-acid polypeptide reads, in one-letter code: Protein nucleotidyltransferase YdiU (484 aa).

Residues G87, G89, R90, K110, D122, G123, R173, and R180 each contribute to the ATP site. The active-site Proton acceptor is D249. The Mg(2+) site is built by N250 and D259. D259 is an ATP binding site.

The protein belongs to the SELO family. The cofactor is Mg(2+). Requires Mn(2+) as cofactor.

It catalyses the reaction L-seryl-[protein] + ATP = 3-O-(5'-adenylyl)-L-seryl-[protein] + diphosphate. It carries out the reaction L-threonyl-[protein] + ATP = 3-O-(5'-adenylyl)-L-threonyl-[protein] + diphosphate. The catalysed reaction is L-tyrosyl-[protein] + ATP = O-(5'-adenylyl)-L-tyrosyl-[protein] + diphosphate. The enzyme catalyses L-histidyl-[protein] + UTP = N(tele)-(5'-uridylyl)-L-histidyl-[protein] + diphosphate. It catalyses the reaction L-seryl-[protein] + UTP = O-(5'-uridylyl)-L-seryl-[protein] + diphosphate. It carries out the reaction L-tyrosyl-[protein] + UTP = O-(5'-uridylyl)-L-tyrosyl-[protein] + diphosphate. In terms of biological role, nucleotidyltransferase involved in the post-translational modification of proteins. It can catalyze the addition of adenosine monophosphate (AMP) or uridine monophosphate (UMP) to a protein, resulting in modifications known as AMPylation and UMPylation. This is Protein nucleotidyltransferase YdiU from Lachnoclostridium phytofermentans (strain ATCC 700394 / DSM 18823 / ISDg) (Clostridium phytofermentans).